Consider the following 614-residue polypeptide: MPQPTRTDPALIRNFCIIAHIDHGKSTLADRMLQLTGVVEERQMRAQYLDRMDIERERGITIKSQAVRLPFTALDDVTYILNLIDTPGHVDFSYEVSRSLAACEGAILLVDAAQGIEAQTLANLYMALEHDLTIIPVLNKIDLPAAQPEKYAAELAGIIGCEPSDVLRVSAKTGEGVEELLNEIVARIPPPVGNADGPARALIFDSVYDTYRGVVTYVRVVDGQITNRERIQMMSTGATHEMLEVGVISPEPTKVDSLGVGEVGYLITGVKDVRQSRVGDTITSAAAPAAEVLPGYRDPKPMVFSGLYPIDGTDYPVLRDALEKLQLNDAALVFEPETSAALGFGFRCGFLGLLHLEITRDRLEREFDLALISTAPNVVYRVRMEDGTEHTVTNPSEFPSGKIAEIREPVVKATVLTPSDYVGPIMELCQGRRGVLDGMEYLSEDRVEMRYTLPLAEIVFDFFDQLKSRTKGYASLDYEPSGEQAADLVKVDILLQGQVVDAFSAIVHRDNAYSYGAEMTKKLRELIPRQQFEVPIQAAIGSRVIARENIRALRKDVLAKCYGGDISRKRKLLEKQKEGKKRMKMVGRVEVPQEAFISALSTESSGEGKDGKKK.

A tr-type G domain is found at 10–192 (ALIRNFCIIA…EIVARIPPPV (183 aa)). Residues 22 to 27 (DHGKST) and 139 to 142 (NKID) each bind GTP.

Belongs to the TRAFAC class translation factor GTPase superfamily. Classic translation factor GTPase family. LepA subfamily.

The protein localises to the cell membrane. The catalysed reaction is GTP + H2O = GDP + phosphate + H(+). In terms of biological role, required for accurate and efficient protein synthesis under certain stress conditions. May act as a fidelity factor of the translation reaction, by catalyzing a one-codon backward translocation of tRNAs on improperly translocated ribosomes. Back-translocation proceeds from a post-translocation (POST) complex to a pre-translocation (PRE) complex, thus giving elongation factor G a second chance to translocate the tRNAs correctly. Binds to ribosomes in a GTP-dependent manner. The sequence is that of Elongation factor 4 from Thermobifida fusca (strain YX).